A 419-amino-acid chain; its full sequence is Ribosome biogenesis protein WDR12 homolog (419 aa).

The segment at 10–91 (VQVHLKTKQE…EDAIEIEYVE (82 aa)) is ubiquitin-like (UBL) domain. WD repeat units follow at residues 103 to 141 (LHDD…LTIP), 142 to 184 (GHTA…NTVE), 191 to 230 (GHER…AGEG), 249 to 287 (GHRE…IKAE), 289 to 328 (STNK…GSVV), 334 to 374 (GHNA…APLY), and 378 to 416 (GHGE…VENM).

It belongs to the WD repeat WDR12/YTM1 family.

Its subcellular location is the nucleus. The protein localises to the nucleolus. It localises to the nucleoplasm. Functionally, required for maturation of ribosomal RNAs and formation of the large ribosomal subunit. This Drosophila pseudoobscura pseudoobscura (Fruit fly) protein is Ribosome biogenesis protein WDR12 homolog.